A 465-amino-acid chain; its full sequence is Ribosomal oxygenase 2 (465 aa).

Residues 139–271 (QPQRYKDELW…NSWGDCLLDS (133 aa)) form the JmjC domain. Residues His179, Asp181, and His240 each contribute to the Fe cation site. A Phosphoserine modification is found at Ser309.

Belongs to the ROX family. MINA53 subfamily. The cofactor is Fe(2+). In terms of tissue distribution, predominantly expressed in testis. Expressed at high levels in spleen, thymus, and colon, but barely detectable in brain, skeletal muscle, and seminal vesicle (at protein level).

It is found in the nucleus. The protein localises to the nucleolus. It catalyses the reaction L-histidyl-[ribosomal protein uL15] + 2-oxoglutarate + O2 = (3S)-3-hydroxy-L-histidyl-[ribosomal protein uL15] + succinate + CO2. It carries out the reaction L-histidyl-[protein] + 2-oxoglutarate + O2 = (3S)-3-hydroxy-L-histidyl-[protein] + succinate + CO2. Functionally, oxygenase that can act as both a histone lysine demethylase and a ribosomal histidine hydroxylase. Is involved in the demethylation of trimethylated 'Lys-9' on histone H3 (H3K9me3), leading to an increase in ribosomal RNA expression. Also catalyzes the hydroxylation of 60S ribosomal protein L27a on 'His-39'. May play an important role in cell growth and survival. May be involved in ribosome biogenesis, most likely during the assembly process of pre-ribosomal particles. This Mus musculus (Mouse) protein is Ribosomal oxygenase 2.